The primary structure comprises 447 residues: Xylose isomerase (447 aa).

Residues His102 and Asp105 contribute to the active site. 7 residues coordinate Mg(2+): Glu233, Glu269, His272, Asp297, Asp308, Asp310, and Asp340.

Belongs to the xylose isomerase family. In terms of assembly, homotetramer. Mg(2+) is required as a cofactor.

The protein resides in the cytoplasm. The catalysed reaction is alpha-D-xylose = alpha-D-xylulofuranose. The chain is Xylose isomerase from Pediococcus pentosaceus (strain ATCC 25745 / CCUG 21536 / LMG 10740 / 183-1w).